Reading from the N-terminus, the 113-residue chain is Protein ORF3 (113 aa).

Hydrophobic stretches follow at residues 1–21 and 32–52; these read MGSP…CLCC and AVVG…GLIL. The interval 27–67 is interaction with host HPX; the sequence is ASRLAAVVGGATAVPAVVSGVTGLILSPSPSPIFIQPTPSL. Positions 47–71 are interaction with the capsid protein; it reads VTGLILSPSPSPIFIQPTPSLPMSF. Phosphoserine; by host is present on Ser-70. A homodimerization, and interaction with host AMBP/bikunin region spans residues 71-113; sequence FHNPGLELALDSRPAPLAPLGVTSPSAPPLPPVVDLPQLGLRR. Positions 89–113 are disordered; the sequence is PLGVTSPSAPPLPPVVDLPQLGLRR. The interval 94 to 103 is interaction with host SRC, HCK, FYN, PIK3R3 and GRB2; sequence SPSAPPLPPV. Residues 95 to 98 carry the PTAP/PSAP motif motif; the sequence is PSAP.

Belongs to the hepevirus ORF3 protein family. As to quaternary structure, forms homooligomers. Interacts with host SRC, HCK, FYN, PIK3R3 and GRB2 (via SH3 domain); binding does not activate the kinases. Interacts with host AMBP/bikunin and AMBP/alpha-1-microglobulin peptides. Interacts with host HPX/hemopexin. Interacts (when phosphorylated) with capsid protein ORF2. Interacts with host TSG101; this interaction plays a role in viral release from the host cell. Interacts with host SIRPA; this interaction down-regulates the phosphorylation of host IRF3. Post-translationally, palmitoylated in the N-terminus.

Its subcellular location is the host endoplasmic reticulum membrane. It localises to the host cytoplasm. The protein localises to the host cytoskeleton. It is found in the virion. The protein resides in the host cell membrane. Its function is as follows. Small multifunctional phosphoprotein involved in virion morphogenesis, egress and counteracting host innate immunity. Plays critical roles in the final steps of viral release by interacting with host TSG101, a member of the vacuolar protein-sorting pathway and using other cellular host proteins involved in vesicle formation pathway. Also acts as a viroporin and forms ion conductive pores allowing viral particle release. Impairs the generation of type I interferon by down-regulating host TLR3 and TLR7 as well as their downstream signaling pathways. Down-regulates the phosphorylation of host IRF3 via the interaction with host SIRP-alpha, thereby inhibiting IFN-I expression. Interacts with host microtubules. This Bandicota bengalensis (lesser bandicoot rat) protein is Protein ORF3.